The primary structure comprises 256 residues: Thiazole synthase (256 aa).

Catalysis depends on Lys-95, which acts as the Schiff-base intermediate with DXP. Residues Gly-156, Ala-182–Gly-183, and Asn-204–Thr-205 each bind 1-deoxy-D-xylulose 5-phosphate.

The protein belongs to the ThiG family. In terms of assembly, homotetramer. Forms heterodimers with either ThiH or ThiS.

The protein resides in the cytoplasm. It catalyses the reaction [ThiS sulfur-carrier protein]-C-terminal-Gly-aminoethanethioate + 2-iminoacetate + 1-deoxy-D-xylulose 5-phosphate = [ThiS sulfur-carrier protein]-C-terminal Gly-Gly + 2-[(2R,5Z)-2-carboxy-4-methylthiazol-5(2H)-ylidene]ethyl phosphate + 2 H2O + H(+). It functions in the pathway cofactor biosynthesis; thiamine diphosphate biosynthesis. Functionally, catalyzes the rearrangement of 1-deoxy-D-xylulose 5-phosphate (DXP) to produce the thiazole phosphate moiety of thiamine. Sulfur is provided by the thiocarboxylate moiety of the carrier protein ThiS. In vitro, sulfur can be provided by H(2)S. This chain is Thiazole synthase, found in Photobacterium profundum (strain SS9).